The following is a 364-amino-acid chain: 3-isopropylmalate dehydrogenase (364 aa).

Position 79–90 (79–90 (GPKWGTGSVRPE)) interacts with NAD(+). Positions 97, 107, 136, and 225 each coordinate substrate. Residues Asp-225, Asp-250, and Asp-254 each coordinate Mg(2+). 289-300 (GSAPDLPKNKVN) is a binding site for NAD(+).

It belongs to the isocitrate and isopropylmalate dehydrogenases family. In terms of assembly, homodimer. The cofactor is Mg(2+). Requires Mn(2+) as cofactor.

It localises to the cytoplasm. The catalysed reaction is (2R,3S)-3-isopropylmalate + NAD(+) = 4-methyl-2-oxopentanoate + CO2 + NADH. It participates in amino-acid biosynthesis; L-leucine biosynthesis; L-leucine from 3-methyl-2-oxobutanoate: step 3/4. Functionally, catalyzes the oxidation of 3-carboxy-2-hydroxy-4-methylpentanoate (3-isopropylmalate) to 3-carboxy-4-methyl-2-oxopentanoate. The product decarboxylates to 4-methyl-2 oxopentanoate. This chain is 3-isopropylmalate dehydrogenase (LEU2), found in Saccharomyces cerevisiae (strain ATCC 204508 / S288c) (Baker's yeast).